The chain runs to 538 residues: Prickle planar cell polarity protein 3-A (538 aa).

The PET domain occupies 66 to 175 (SGSQRDSLCE…CVRPVSGTMS (110 aa)). 3 LIM zinc-binding domains span residues 177–241 (TVCQ…ELKR), 242–302 (PRCL…LYAQ), and 305–366 (DSCG…NATP). Over residues 369-378 (SFSPSQTDLS) the composition is skewed to polar residues. Disordered regions lie at residues 369–398 (SFSP…DGDS), 433–463 (RGAP…TRVT), and 475–538 (SVSL…CLLS). Positions 435–449 (APKEFSRECPNRRSL) are enriched in basic and acidic residues. Polar residues predominate over residues 451-463 (DLNSHTRTPTRVT). 2 stretches are compositionally biased toward low complexity: residues 475-488 (SVSL…SSSS) and 514-523 (APPTHAPTST).

The protein belongs to the prickle / espinas / testin family. In terms of assembly, interacts with vangl2 via its C-terminus. The vangl2-dependent membrane recruitment of prickle3 is a prerequisite for its polarization. Interacts with wtip. Wtip is involved in the recruitment of prickle3 to the basal body. In terms of tissue distribution, predominantly expressed in the epidermal ectoderm.

It is found in the cytoplasm. Its subcellular location is the cell membrane. The protein localises to the mitochondrion. In terms of biological role, involved in the planar cell polarity (PCP) pathway that is essential for the polarization of epithelial cells during morphogenetic processes, including gastrulation and neurulation. PCP is maintained by two molecular modules, the global and the core modules. Proteins of the core module include the proteins Frizzled (Fz), Disheveled (Dsh), Van Gogh (Vang), Prickle (Pk), Flamingo (Fmi, Celsr) and Diego (Dgo). The core module proteins develop subcellular asymmetry, accumulating in two groups on opposite sides of epithelial cells. Distinct proximal (Vang, Pk and Fmi) and distal (Fz, Dsh, Dgo and Fmi) complexes segregate to opposite sides of the cell, where they interact with the opposite complex in the neighboring cell at or near the adherents junctions. Directional information to orient polarization with respect to the tissue axes is provided by the global module which involves Wnt proteins. Involved in the organization of the basal body. Involved in cilia growth and positioning. Required for proper assembly, stability, and function of mitochondrial membrane ATP synthase (mitochondrial complex V). The chain is Prickle planar cell polarity protein 3-A (prickle3-a) from Xenopus laevis (African clawed frog).